The following is a 66-amino-acid chain: Large ribosomal subunit protein bL33c (66 aa).

It belongs to the bacterial ribosomal protein bL33 family.

The protein localises to the plastid. Its subcellular location is the chloroplast. The protein is Large ribosomal subunit protein bL33c of Aethionema cordifolium (Lebanon stonecress).